Consider the following 1434-residue polypeptide: Probable deoxyribonuclease RhsA (1434 aa).

The tract at residues 14–42 (AMHAGNRPNPPDDRPQPCRGKPPTSPGKT) is disordered. 2 consecutive transmembrane segments (helical) span residues 48 to 68 (FLGA…VAAA) and 70 to 90 (VFLV…LAVF). YD repeat units follow at residues 486 to 521 (YDAA…CADG), 592 to 628 (DDTG…LGRE), and 847 to 876 (YDAR…LTEV).

Belongs to the RHS/WapA nuclease family.

The protein localises to the membrane. Functionally, toxic component of a toxin-immunity protein module, which functions as a cellular contact-dependent growth inhibition (CDI) system. This protein may be a nuclease that is specifically inhibited by its cognate immunity protein RhsAI. Upon expression of the C-terminus (residues 1284-1434) in E.coli growth is inhibited, cells elongate, nucleoids condense and plasmid DNA is degraded; these effects are blocked specifically by cognate immunity protein RshIA. Cell contact is necessary for growth inhibition. The chain is Probable deoxyribonuclease RhsA (rhsA) from Dickeya dadantii (strain 3937) (Erwinia chrysanthemi (strain 3937)).